A 155-amino-acid polypeptide reads, in one-letter code: Probable Brix domain-containing ribosomal biogenesis protein (155 aa).

A Brix domain is found at 1-155; it reads MLLTTSRKPS…LLIRDFRVGE (155 aa).

Its function is as follows. Probably involved in the biogenesis of the ribosome. In Methanothermobacter thermautotrophicus (strain ATCC 29096 / DSM 1053 / JCM 10044 / NBRC 100330 / Delta H) (Methanobacterium thermoautotrophicum), this protein is Probable Brix domain-containing ribosomal biogenesis protein.